The following is a 483-amino-acid chain: MLTLDTLNVMLAVSEEGLIEEMIIALLASPQLAVFFEKFPRLKAAITDDVPRWREALRSRLKDARVPPELTEEVMCYQQSQLLSTPQFIVQLPQILDLLHRLNSPWAEQARQLVDANSTITSALHTLFLQRWRLSLIVQATTLNQQLLEEEREQLLSEVQERMTLSGQLEPILADNNTAAGRLWDMSAGQLKRGDYQLIVKYGEFLNEQPELKRLAEQLGRSREAKSIPRNDAQMEAFRTMVREPATVPEQVDGLQQSDDILRLLPPELATLGITELEYEFYRRLVEKQLLTYRLHGESWREKVIERPVVHKDYDEQPRGPFIVCVDTSGSMGGFNEQCAKAFCLALMRIALAENRRCYIMLFSTEIVRYELSGPQGIEQAIRFLSQQFRGGTDLASCFRAIMERLQSREWFDADAVVISDFIAQRLPDDVTSKVKELQRVHQHRFHAVAMSAHGKPGIMRIFDHIWRFDTGMRSRLLRRWRR.

This sequence belongs to the ViaA family. Homodimer. Interacts with RavA.

It localises to the cytoplasm. In terms of biological role, component of the RavA-ViaA chaperone complex, which may act on the membrane to optimize the function of some of the respiratory chains. ViaA stimulates the ATPase activity of RavA. This Escherichia coli O139:H28 (strain E24377A / ETEC) protein is Regulatory protein ViaA.